The following is a 277-amino-acid chain: Cation-dependent mannose-6-phosphate receptor (277 aa).

Positions 1-26 (MFPFYSCWRTGLLLLLLAVAVRESWQ) are cleaved as a signal peptide. Residues 27-185 (TEEKTCDLVG…SLACSPEISH (159 aa)) lie on the Lumenal side of the membrane. Residues 30–181 (KTCDLVGEKG…EMDSSLACSP (152 aa)) form the MRH domain. An intrachain disulfide couples cysteine 32 to cysteine 78. N-linked (GlcNAc...) asparagine glycosylation is found at asparagine 57, asparagine 83, asparagine 94, asparagine 107, and asparagine 113. 2 disulfides stabilise this stretch: cysteine 132/cysteine 167 and cysteine 145/cysteine 179. Residues 186 to 210 (LSVGSILLVTFASLVAVYVVGGFLY) traverse the membrane as a helical segment. Residues 211–277 (QRLVVGAKGM…EERDDHLLPM (67 aa)) are Cytoplasmic-facing. A disordered region spans residues 256 to 277 (RGVGDDQLGEESEERDDHLLPM). Serine 267 is subject to Phosphoserine.

Homodimer. Binds GGA1, GGA2 and GGA3.

It localises to the lysosome membrane. Its function is as follows. Transport of phosphorylated lysosomal enzymes from the Golgi complex and the cell surface to lysosomes. Lysosomal enzymes bearing phosphomannosyl residues bind specifically to mannose-6-phosphate receptors in the Golgi apparatus and the resulting receptor-ligand complex is transported to an acidic prelyosomal compartment where the low pH mediates the dissociation of the complex. This chain is Cation-dependent mannose-6-phosphate receptor (M6PR), found in Homo sapiens (Human).